A 449-amino-acid chain; its full sequence is HSPB1-associated protein 1 homolog (449 aa).

The JmjC domain maps to 102-266; that stretch reads WAYADYKYIA…DEARVAEALT (165 aa). Positions 385-395 are enriched in basic and acidic residues; that stretch reads DQDKLRSDNKL. The segment at 385–416 is disordered; sequence DQDKLRSDNKLGQRSGQSVLQDTENPGGSGEM. The segment covering 396-410 has biased composition (polar residues); it reads GQRSGQSVLQDTENP.

It localises to the cytoplasm. In terms of biological role, may play a role in cellular stress response. In Danio rerio (Zebrafish), this protein is HSPB1-associated protein 1 homolog (hspbap1).